Consider the following 302-residue polypeptide: Urease accessory protein UreD 1 (302 aa).

This sequence belongs to the UreD family. As to quaternary structure, ureD, UreF and UreG form a complex that acts as a GTP-hydrolysis-dependent molecular chaperone, activating the urease apoprotein by helping to assemble the nickel containing metallocenter of UreC. The UreE protein probably delivers the nickel.

It localises to the cytoplasm. Required for maturation of urease via the functional incorporation of the urease nickel metallocenter. The polypeptide is Urease accessory protein UreD 1 (Psychrobacter cryohalolentis (strain ATCC BAA-1226 / DSM 17306 / VKM B-2378 / K5)).